Consider the following 301-residue polypeptide: GTPase Era (301 aa).

Positions 4–173 (KAGFVALIGK…LECISKHLSP (170 aa)) constitute an Era-type G domain. A G1 region spans residues 12–19 (GKPNAGKS). GTP is bound at residue 12–19 (GKPNAGKS). The G2 stretch occupies residues 38–42 (NATRK). Residues 64–67 (DTPG) form a G3 region. GTP-binding positions include 64–68 (DTPGL) and 122–125 (SKID). The interval 122–125 (SKID) is G4. The tract at residues 152 to 154 (LSA) is G5. The KH type-2 domain occupies 204 to 280 (LSDEIPYESD…FLNLQVIAQK (77 aa)).

Belongs to the TRAFAC class TrmE-Era-EngA-EngB-Septin-like GTPase superfamily. Era GTPase family. Monomer.

It localises to the cytoplasm. The protein localises to the cell inner membrane. In terms of biological role, an essential GTPase that binds both GDP and GTP, with rapid nucleotide exchange. Plays a role in 16S rRNA processing and 30S ribosomal subunit biogenesis and possibly also in cell cycle regulation and energy metabolism. The polypeptide is GTPase Era (Helicobacter pylori (strain Shi470)).